A 288-amino-acid polypeptide reads, in one-letter code: Polyamine aminopropyltransferase (288 aa).

The PABS domain maps to 9–238 (ETLHDQFGQY…GIMTFAWATD (230 aa)). Q33 provides a ligand contact to S-methyl-5'-thioadenosine. Spermidine-binding residues include H64 and D88. Residues E108 and 140-141 (DG) contribute to the S-methyl-5'-thioadenosine site. The Proton acceptor role is filled by D158. 158–161 (DCTD) provides a ligand contact to spermidine. P165 serves as a coordination point for S-methyl-5'-thioadenosine.

This sequence belongs to the spermidine/spermine synthase family. Homodimer or homotetramer.

It is found in the cytoplasm. It catalyses the reaction S-adenosyl 3-(methylsulfanyl)propylamine + putrescine = S-methyl-5'-thioadenosine + spermidine + H(+). It participates in amine and polyamine biosynthesis; spermidine biosynthesis; spermidine from putrescine: step 1/1. In terms of biological role, catalyzes the irreversible transfer of a propylamine group from the amino donor S-adenosylmethioninamine (decarboxy-AdoMet) to putrescine (1,4-diaminobutane) to yield spermidine. The sequence is that of Polyamine aminopropyltransferase from Escherichia fergusonii (strain ATCC 35469 / DSM 13698 / CCUG 18766 / IAM 14443 / JCM 21226 / LMG 7866 / NBRC 102419 / NCTC 12128 / CDC 0568-73).